Here is a 22-residue protein sequence, read N- to C-terminus: Thylakoid lumenal 11 kDa protein (22 aa).

The interval 1–22 (FKGGGPYGQGVTRGQDLSGKDF) is disordered.

This sequence to A.thaliana At2g44920.

The protein localises to the plastid. It localises to the chloroplast thylakoid lumen. The sequence is that of Thylakoid lumenal 11 kDa protein from Spinacia oleracea (Spinach).